A 404-amino-acid chain; its full sequence is Glucose-1-phosphate adenylyltransferase (404 aa).

Alpha-D-glucose 1-phosphate is bound by residues Y99, G164, E179–K180, and S197.

Belongs to the bacterial/plant glucose-1-phosphate adenylyltransferase family.

The catalysed reaction is alpha-D-glucose 1-phosphate + ATP + H(+) = ADP-alpha-D-glucose + diphosphate. It functions in the pathway capsule biogenesis; capsule polysaccharide biosynthesis. Its pathway is glycan biosynthesis; glycogen biosynthesis. Functionally, involved in the biosynthesis of ADP-glucose, a building block, required in the biosynthesis of maltose-1-phosphate (M1P) and in the elongation reactions to produce linear alpha-1,4-glucans. Catalyzes the reaction between ATP and alpha-D-glucose 1-phosphate (G1P) to produce pyrophosphate and ADP-Glc. This is Glucose-1-phosphate adenylyltransferase from Mycolicibacterium paratuberculosis (strain ATCC BAA-968 / K-10) (Mycobacterium paratuberculosis).